The following is a 207-amino-acid chain: 8-oxoguanine DNA glycosylase/AP lyase (207 aa).

Catalysis depends on residues Lys128 and Asp146.

This sequence belongs to the type-2 OGG1 family.

It carries out the reaction 2'-deoxyribonucleotide-(2'-deoxyribose 5'-phosphate)-2'-deoxyribonucleotide-DNA = a 3'-end 2'-deoxyribonucleotide-(2,3-dehydro-2,3-deoxyribose 5'-phosphate)-DNA + a 5'-end 5'-phospho-2'-deoxyribonucleoside-DNA + H(+). Its function is as follows. Catalyzes the excision of an oxidatively damaged form of guanine (7,8-dihydro-8-oxoguanine = 8-oxoG) from DNA. Also cleaves the DNA backbone at apurinic/apyrimidinic sites (AP sites). This is 8-oxoguanine DNA glycosylase/AP lyase from Saccharolobus islandicus (strain Y.N.15.51 / Yellowstone #2) (Sulfolobus islandicus).